Here is a 243-residue protein sequence, read N- to C-terminus: Glutathione S-transferase omega-2 (243 aa).

Positions 22 to 101 (GLIRIYSMRF…YLDDAYPGRK (80 aa)) constitute a GST N-terminal domain. Cysteine 32 acts as the Nucleophile in catalysis. Residues lysine 59, isoleucine 72, and 85–86 (ES) each bind glutathione. One can recognise a GST C-terminal domain in the interval 106–231 (DPYERARQKM…IFQGFLNLYF (126 aa)).

This sequence belongs to the GST superfamily. Omega family. Expressed in a range of tissues, including the liver, kidney, skeletal muscle and prostate. Strongest expression in the testis.

The enzyme catalyses RX + glutathione = an S-substituted glutathione + a halide anion + H(+). The catalysed reaction is L-dehydroascorbate + 2 glutathione = glutathione disulfide + L-ascorbate. It catalyses the reaction methylarsonate + 2 glutathione + H(+) = methylarsonous acid + glutathione disulfide + H2O. Functionally, exhibits glutathione-dependent thiol transferase activity. Has high dehydroascorbate reductase activity and may contribute to the recycling of ascorbic acid. Participates in the biotransformation of inorganic arsenic and reduces monomethylarsonic acid (MMA). This Homo sapiens (Human) protein is Glutathione S-transferase omega-2 (GSTO2).